The chain runs to 752 residues: MSDSEEDEEEEEASEVILSSVVQKKKKKNLRFGEEVERRDGLVLLAQSTPMVRSRSQGTTRRVTPTPLVDVEKPLPNGDLYIGSFSGGFPHGSGKYLWKDGCMYEGDWKRGKASGKGKFSWPSGATYEGEFKSGRMEGFGTFTGADGDTYRGTWVADRKHGHGQKRYANGDFYEGTWRRNLQDGRGRYVWRNGNQYTGEWRSGVISGKGLLVWPNGNRYEGLWENGIPKGNGVFTWSDGSSCVGAWNESNIMRSFFNGVEKNDLIVGNRKRSSVDSGAGSLGGEKVFPRICIWESDGEAGDITCDIIDNVEASMIYRDRISVDRDGFRQFKKNPCWFNGEAKKPGQTISKGHKKYDLMLNLQLGIRYSVGKHASIVRDLKQTDFDPKEKFWTRFPPEGTKTTPPHQSVDFRWKDYCPLVFRRLRELFQVDPAKYMLAICGNDALRELSSPGKSGSFFYLTQDDRFMIKTVKKSEVKVLLRMLPSYYKHVCQYENSLVTRFYGVHCVKPVGGQKTRFIVMGNLFCSEYRIQRRFDLKGSSHGRSTAKPEGEIDETTTLKDLDLNFSFRLQRNWYQELMKQIKRDCEFLEAERIMDYSLLVGVHFRDDNTGEKMGLSPFVLRSGRIDSYQNEKFMRGCRFLEAELQDMDRILAGRKPSIRLGANMPAKAERMARRSDFDQYSSGGASYPSHGEMYEVVLYFGVIDILQDYDITKKIEHAYKSLQADPASISAVDPKLYSKRFRDFISRIFIEEG.

7 MORN repeats span residues 81–103 (YIGS…DGCM), 104–126 (YEGD…SGAT), 127–149 (YEGE…DGDT), 150–172 (YRGT…NGDF), 173–195 (YEGT…NGNQ), 196–218 (YTGE…NGNR), and 219–241 (YEGL…DGSS). The region spanning 349 to 748 (SKGHKKYDLM…RFRDFISRIF (400 aa)) is the PIPK domain. Residues 708–729 (YDITKKIEHAYKSLQADPASIS) are activation loop.

Phosphorylation inactivates the enzyme. In terms of tissue distribution, expressed in the whole plant, preferentially in roots. Strongly expressed in meristematic tissues, namely procambial cell layers.

It catalyses the reaction a 1,2-diacyl-sn-glycero-3-phospho-(1D-myo-inositol 4-phosphate) + ATP = a 1,2-diacyl-sn-glycero-3-phospho-(1D-myo-inositol-4,5-bisphosphate) + ADP + H(+). Catalyzes the synthesis of phosphatidylinositol 4,5-bisphosphate and phosphatidylinositol 3,4-bisphosphate. The polypeptide is Phosphatidylinositol 4-phosphate 5-kinase 1 (PIP5K1) (Arabidopsis thaliana (Mouse-ear cress)).